The primary structure comprises 474 residues: L-arabinose isomerase (474 aa).

Positions 306, 331, 348, and 447 each coordinate Mn(2+).

This sequence belongs to the arabinose isomerase family. Requires Mn(2+) as cofactor.

The enzyme catalyses beta-L-arabinopyranose = L-ribulose. Its pathway is carbohydrate degradation; L-arabinose degradation via L-ribulose; D-xylulose 5-phosphate from L-arabinose (bacterial route): step 1/3. Catalyzes the conversion of L-arabinose to L-ribulose. In Lactiplantibacillus plantarum (strain ATCC BAA-793 / NCIMB 8826 / WCFS1) (Lactobacillus plantarum), this protein is L-arabinose isomerase.